Reading from the N-terminus, the 363-residue chain is Phosphoserine aminotransferase (363 aa).

Arginine 42 is an L-glutamate binding site. Positions 105, 155, 175, and 198 each coordinate pyridoxal 5'-phosphate. The residue at position 199 (lysine 199) is an N6-(pyridoxal phosphate)lysine. 240-241 (NT) lines the pyridoxal 5'-phosphate pocket.

Belongs to the class-V pyridoxal-phosphate-dependent aminotransferase family. SerC subfamily. In terms of assembly, homodimer. It depends on pyridoxal 5'-phosphate as a cofactor.

The protein localises to the cytoplasm. It carries out the reaction O-phospho-L-serine + 2-oxoglutarate = 3-phosphooxypyruvate + L-glutamate. It catalyses the reaction 4-(phosphooxy)-L-threonine + 2-oxoglutarate = (R)-3-hydroxy-2-oxo-4-phosphooxybutanoate + L-glutamate. It functions in the pathway amino-acid biosynthesis; L-serine biosynthesis; L-serine from 3-phospho-D-glycerate: step 2/3. It participates in cofactor biosynthesis; pyridoxine 5'-phosphate biosynthesis; pyridoxine 5'-phosphate from D-erythrose 4-phosphate: step 3/5. In terms of biological role, catalyzes the reversible conversion of 3-phosphohydroxypyruvate to phosphoserine and of 3-hydroxy-2-oxo-4-phosphonooxybutanoate to phosphohydroxythreonine. In Herminiimonas arsenicoxydans, this protein is Phosphoserine aminotransferase.